The primary structure comprises 430 residues: Glutamate-1-semialdehyde 2,1-aminomutase (430 aa).

An N6-(pyridoxal phosphate)lysine modification is found at Lys267.

This sequence belongs to the class-III pyridoxal-phosphate-dependent aminotransferase family. HemL subfamily. Homodimer. Pyridoxal 5'-phosphate serves as cofactor.

Its subcellular location is the cytoplasm. The enzyme catalyses (S)-4-amino-5-oxopentanoate = 5-aminolevulinate. Its pathway is porphyrin-containing compound metabolism; protoporphyrin-IX biosynthesis; 5-aminolevulinate from L-glutamyl-tRNA(Glu): step 2/2. This Lawsonia intracellularis (strain PHE/MN1-00) protein is Glutamate-1-semialdehyde 2,1-aminomutase.